The sequence spans 115 residues: NADH-ubiquinone oxidoreductase chain 3 (115 aa).

Transmembrane regions (helical) follow at residues 4–24 (LTAL…AFWL), 55–75 (FFLV…LLPL), and 87–107 (MMLT…YEWM).

It belongs to the complex I subunit 3 family. In terms of assembly, core subunit of respiratory chain NADH dehydrogenase (Complex I) which is composed of 45 different subunits. Interacts with TMEM186. Interacts with TMEM242.

Its subcellular location is the mitochondrion inner membrane. The enzyme catalyses a ubiquinone + NADH + 5 H(+)(in) = a ubiquinol + NAD(+) + 4 H(+)(out). Functionally, core subunit of the mitochondrial membrane respiratory chain NADH dehydrogenase (Complex I) which catalyzes electron transfer from NADH through the respiratory chain, using ubiquinone as an electron acceptor. Essential for the catalytic activity of complex I. The chain is NADH-ubiquinone oxidoreductase chain 3 from Peromyscus boylii (Brush deermouse).